The sequence spans 119 residues: NAD(P)H-quinone oxidoreductase subunit M (119 aa).

It belongs to the complex I NdhM subunit family. In terms of assembly, NDH-1 can be composed of about 15 different subunits; different subcomplexes with different compositions have been identified which probably have different functions.

Its subcellular location is the cellular thylakoid membrane. It carries out the reaction a plastoquinone + NADH + (n+1) H(+)(in) = a plastoquinol + NAD(+) + n H(+)(out). It catalyses the reaction a plastoquinone + NADPH + (n+1) H(+)(in) = a plastoquinol + NADP(+) + n H(+)(out). Functionally, NDH-1 shuttles electrons from an unknown electron donor, via FMN and iron-sulfur (Fe-S) centers, to quinones in the respiratory and/or the photosynthetic chain. The immediate electron acceptor for the enzyme in this species is believed to be plastoquinone. Couples the redox reaction to proton translocation, and thus conserves the redox energy in a proton gradient. Cyanobacterial NDH-1 also plays a role in inorganic carbon-concentration. In Picosynechococcus sp. (strain ATCC 27264 / PCC 7002 / PR-6) (Agmenellum quadruplicatum), this protein is NAD(P)H-quinone oxidoreductase subunit M.